The following is an 84-amino-acid chain: Small ribosomal subunit protein uS17 (84 aa).

The protein belongs to the universal ribosomal protein uS17 family. In terms of assembly, part of the 30S ribosomal subunit.

In terms of biological role, one of the primary rRNA binding proteins, it binds specifically to the 5'-end of 16S ribosomal RNA. This is Small ribosomal subunit protein uS17 from Salmonella typhi.